The chain runs to 56 residues: Large ribosomal subunit protein uL30 (56 aa).

The protein belongs to the universal ribosomal protein uL30 family. As to quaternary structure, part of the 50S ribosomal subunit.

In Nitratidesulfovibrio vulgaris (strain DSM 19637 / Miyazaki F) (Desulfovibrio vulgaris), this protein is Large ribosomal subunit protein uL30.